Reading from the N-terminus, the 640-residue chain is MGKIIGIDLGTTNSCVSVMQGSQPTVIENSEGNRTTPSIIALTKTGDRLVGQAAKRQAITNPKNTIFSIKRFMGRKYDEINDEKKLAPYEIINEGGEARVKINDKIYSPQEVSAMILQKMKQTAEDFLGEKVTEAVITVPAYFNDAQRQATKDAGRIAGLDVKRIINEPTAAALAYGLDRKQTSEKVAVFDLGGGTFDISVLELGDGVFEVKSTDGDTHLGGDNFDQKIIDYIADEFKKQEGIDLRKDAITLQRLKEAAEKAKIELSSRTDTEINLPFITATQEGPKHLVINLTRAKFEALCADLFDKILDPCRRAIKNSKLEMKEIDEVVLVGGSTRIPKVQALVKDFFGKEPNKSVNPDEVVAIGAAIQGGVLKGDVTDVLLLDVTPLSLGIETLGGVMTKLIDANTTIPTRKQEVFSTAGDNQTSVEVHVLQGERPMATDNKTLGRFHLGDIPPSPRGIPQIEVTFDIDSNGILHVSAKDKATGKEQSIKIESSSKLTDAEISKMKEDAKEHAAEDQKRKEEIDTRNIADSLIFSTEKQLKELGDKIPADKRPVLEGSLEKLKEAYKNGTVESLKSAMEELNKEWSEIASHLYQSQGPESSQPETAAQSDSGEKSKKNSGDGNVENAEYEVIDGNDK.

Phosphothreonine; by autocatalysis is present on Thr196. Disordered stretches follow at residues 487–526 (GKEQ…KEEI) and 593–640 (SHLY…GNDK). Residues 501 to 526 (TDAEISKMKEDAKEHAAEDQKRKEEI) show a composition bias toward basic and acidic residues. The span at 595–613 (LYQSQGPESSQPETAAQSD) shows a compositional bias: polar residues. Positions 630-640 (AEYEVIDGNDK) are enriched in acidic residues.

Belongs to the heat shock protein 70 family.

Functionally, acts as a chaperone. The polypeptide is Chaperone protein DnaK (Pelodictyon phaeoclathratiforme (strain DSM 5477 / BU-1)).